A 141-amino-acid chain; its full sequence is NADPH-dependent 7-cyano-7-deazaguanine reductase (141 aa).

Cysteine 34 acts as the Thioimide intermediate in catalysis. Aspartate 41 (proton donor) is an active-site residue. Substrate is bound by residues valine 56 to leucine 58 and histidine 75 to glutamate 76.

It belongs to the GTP cyclohydrolase I family. QueF type 1 subfamily.

The protein resides in the cytoplasm. The catalysed reaction is 7-aminomethyl-7-carbaguanine + 2 NADP(+) = 7-cyano-7-deazaguanine + 2 NADPH + 3 H(+). It participates in tRNA modification; tRNA-queuosine biosynthesis. Catalyzes the NADPH-dependent reduction of 7-cyano-7-deazaguanine (preQ0) to 7-aminomethyl-7-deazaguanine (preQ1). This Acidithiobacillus ferrooxidans (strain ATCC 23270 / DSM 14882 / CIP 104768 / NCIMB 8455) (Ferrobacillus ferrooxidans (strain ATCC 23270)) protein is NADPH-dependent 7-cyano-7-deazaguanine reductase.